The following is a 158-amino-acid chain: NAD(P)H-quinone oxidoreductase subunit J, chloroplastic (158 aa).

It belongs to the complex I 30 kDa subunit family. In terms of assembly, NDH is composed of at least 16 different subunits, 5 of which are encoded in the nucleus.

It localises to the plastid. The protein resides in the chloroplast thylakoid membrane. The enzyme catalyses a plastoquinone + NADH + (n+1) H(+)(in) = a plastoquinol + NAD(+) + n H(+)(out). The catalysed reaction is a plastoquinone + NADPH + (n+1) H(+)(in) = a plastoquinol + NADP(+) + n H(+)(out). Its function is as follows. NDH shuttles electrons from NAD(P)H:plastoquinone, via FMN and iron-sulfur (Fe-S) centers, to quinones in the photosynthetic chain and possibly in a chloroplast respiratory chain. The immediate electron acceptor for the enzyme in this species is believed to be plastoquinone. Couples the redox reaction to proton translocation, and thus conserves the redox energy in a proton gradient. This is NAD(P)H-quinone oxidoreductase subunit J, chloroplastic from Aethionema grandiflorum (Persian stone-cress).